A 549-amino-acid polypeptide reads, in one-letter code: CDK5RAP3 protein homolog (549 aa).

Short sequence motifs (shuffled ATG8-binding motif) lie at residues 274–277, 285–288, and 333–336; these read IDWD and ISWD.

Belongs to the CDK5RAP3 family. In terms of assembly, substrate adapter component of the UFM1 ribosome E3 ligase (UREL) complex. Interacts with ATG8 family proteins.

In terms of biological role, substrate adapter of E3 ligase complexes mediating ufmylation, the covalent attachment of the ubiquitin-like modifier UFM1 to substrate proteins, and which is involved in various processes, such as ribosome recycling and reticulophagy (also called ER-phagy). This chain is CDK5RAP3 protein homolog, found in Arabidopsis thaliana (Mouse-ear cress).